The sequence spans 330 residues: Flotillin-like protein FloA (330 aa).

The next 2 helical transmembrane spans lie at 3-23 (IISV…TLYM) and 26-46 (LRLW…TLIA).

It belongs to the flotillin-like FloA family. In terms of assembly, homooligomerizes.

The protein localises to the cell membrane. Its subcellular location is the membrane raft. In terms of biological role, found in functional membrane microdomains (FMM) that may be equivalent to eukaryotic membrane rafts. FMMs are highly dynamic and increase in number as cells age. Flotillins are thought to be important factors in membrane fluidity. In Sorangium cellulosum (strain So ce56) (Polyangium cellulosum (strain So ce56)), this protein is Flotillin-like protein FloA.